We begin with the raw amino-acid sequence, 185 residues long: Ribosome-recycling factor (185 aa).

The segment covering 131–155 (DRKNANDKIKKSEKDKEITADESKS) has biased composition (basic and acidic residues). The tract at residues 131–156 (DRKNANDKIKKSEKDKEITADESKSA) is disordered.

Belongs to the RRF family.

It is found in the cytoplasm. Responsible for the release of ribosomes from messenger RNA at the termination of protein biosynthesis. May increase the efficiency of translation by recycling ribosomes from one round of translation to another. In Sulfurimonas denitrificans (strain ATCC 33889 / DSM 1251) (Thiomicrospira denitrificans (strain ATCC 33889 / DSM 1251)), this protein is Ribosome-recycling factor.